The primary structure comprises 600 residues: Aspartate--tRNA(Asp/Asn) ligase (600 aa).

Glu-187 contacts L-aspartate. An aspartate region spans residues 211 to 214 (QIFK). L-aspartate is bound by residues Arg-233 and His-463. 233–235 (RDE) contacts ATP. Residue Glu-497 participates in ATP binding. Residue Arg-504 participates in L-aspartate binding. An ATP-binding site is contributed by 549-552 (GIDR).

This sequence belongs to the class-II aminoacyl-tRNA synthetase family. Type 1 subfamily. In terms of assembly, homodimer.

The protein resides in the cytoplasm. It catalyses the reaction tRNA(Asx) + L-aspartate + ATP = L-aspartyl-tRNA(Asx) + AMP + diphosphate. Its function is as follows. Aspartyl-tRNA synthetase with relaxed tRNA specificity since it is able to aspartylate not only its cognate tRNA(Asp) but also tRNA(Asn). Reaction proceeds in two steps: L-aspartate is first activated by ATP to form Asp-AMP and then transferred to the acceptor end of tRNA(Asp/Asn). The chain is Aspartate--tRNA(Asp/Asn) ligase from Wolbachia sp. subsp. Brugia malayi (strain TRS).